Here is a 154-residue protein sequence, read N- to C-terminus: MRKQVEIFTDGSCLGNPGPGGYGALLRYKQHEKPLSAGYRLTTNNRMELMAAIAALETLTTECDVVLCTDSQYVRQGITSWIHNWKKRGWKTADKKPVKNVDLWQRLDTAIQRHSVRWEWVKGHAGHPENERCDELARAAAGAPTLDDTGYQAE.

One can recognise an RNase H type-1 domain in the interval 1–142 (MRKQVEIFTD…CDELARAAAG (142 aa)). Asp-10, Glu-48, Asp-70, and Asp-134 together coordinate Mg(2+).

This sequence belongs to the RNase H family. In terms of assembly, monomer. Requires Mg(2+) as cofactor.

It localises to the cytoplasm. The catalysed reaction is Endonucleolytic cleavage to 5'-phosphomonoester.. Functionally, endonuclease that specifically degrades the RNA of RNA-DNA hybrids. In Pectobacterium carotovorum subsp. carotovorum (strain PC1), this protein is Ribonuclease H.